Consider the following 557-residue polypeptide: Formate--tetrahydrofolate ligase (557 aa).

65–72 (TPAGEGKT) lines the ATP pocket.

Belongs to the formate--tetrahydrofolate ligase family.

It carries out the reaction (6S)-5,6,7,8-tetrahydrofolate + formate + ATP = (6R)-10-formyltetrahydrofolate + ADP + phosphate. Its pathway is one-carbon metabolism; tetrahydrofolate interconversion. The chain is Formate--tetrahydrofolate ligase from Methylorubrum extorquens (strain PA1) (Methylobacterium extorquens).